Here is a 218-residue protein sequence, read N- to C-terminus: Ras-related protein Rab11D (218 aa).

Residue 20–27 (GDSGVGKS) participates in GTP binding. Positions 42 to 50 (SKSTIGVEF) match the Effector region motif. GTP-binding positions include 68–72 (DTAGQ) and 126–129 (NKSD). S-geranylgeranyl cysteine attachment occurs at residues Cys215 and Cys216.

The protein belongs to the small GTPase superfamily. Rab family.

The protein localises to the cell membrane. The polypeptide is Ras-related protein Rab11D (RAB11D) (Lotus japonicus (Lotus corniculatus var. japonicus)).